The chain runs to 935 residues: Inter-alpha-trypsin inhibitor heavy chain H2 (935 aa).

A signal peptide spans 1–18 (MKGLTCFLLCFLLSEAQG). The propeptide occupies 19 to 53 (FEIPTNGLSEFAEYGDLAELALGKFHVVPGNRRSQ). The 130-residue stretch at 45 to 174 (VVPGNRRSQE…KVQFELHYQE (130 aa)) folds into the VIT domain. Residue N107 is glycosylated (N-linked (GlcNAc...) asparagine). Position 271 is a 4-carboxyglutamate (E271). Residues 297 to 457 (PKNILFVIDV…YDFLKRLSND (161 aa)) enclose the VWFA domain. N-linked (GlcNAc...) asparagine glycosylation is present at N434. Position 455 is a phosphoserine (S455). The residue at position 691 (D691) is an Aspartate 1-(chondroitin 4-sulfate)-ester. Positions 692–935 (PHFIIYLPRS…PLLYSFLKRP (244 aa)) are excised as a propeptide. Phosphoserine is present on S875.

The protein belongs to the ITIH family. In terms of assembly, I-alpha-I plasma protease inhibitors are assembled from one or two heavy chains (HC) and one light chain, bikunin. Inter-alpha-inhibitor (I-alpha-I) is composed of ITIH1/HC1, ITIH2/HC2 and bikunin. Heavy chains are linked to bikunin via chondroitin 4-sulfate esterified to the alpha-carboxyl of the C-terminal aspartate after propeptide cleavage. In terms of processing, phosphorylated by FAM20C in the extracellular medium.

The protein localises to the secreted. Functionally, may act as a carrier of hyaluronan in serum or as a binding protein between hyaluronan and other matrix protein, including those on cell surfaces in tissues to regulate the localization, synthesis and degradation of hyaluronan which are essential to cells undergoing biological processes. The sequence is that of Inter-alpha-trypsin inhibitor heavy chain H2 (ITIH2) from Sus scrofa (Pig).